The following is a 650-amino-acid chain: Acetyl-coenzyme A synthetase (650 aa).

CoA contacts are provided by residues Arg-191 to Arg-194, Thr-311, and Asn-335. ATP is bound by residues Gly-387–Pro-389, Asp-411–Thr-416, Asp-500, and Arg-515. Ser-523 lines the CoA pocket. Arg-526 serves as a coordination point for ATP. Mg(2+) is bound by residues Val-537, His-539, and Val-542. Position 584 (Arg-584) interacts with CoA. The residue at position 609 (Lys-609) is an N6-acetyllysine.

Belongs to the ATP-dependent AMP-binding enzyme family. The cofactor is Mg(2+). In terms of processing, acetylated. Deacetylation by the SIR2-homolog deacetylase activates the enzyme.

The enzyme catalyses acetate + ATP + CoA = acetyl-CoA + AMP + diphosphate. In terms of biological role, catalyzes the conversion of acetate into acetyl-CoA (AcCoA), an essential intermediate at the junction of anabolic and catabolic pathways. AcsA undergoes a two-step reaction. In the first half reaction, AcsA combines acetate with ATP to form acetyl-adenylate (AcAMP) intermediate. In the second half reaction, it can then transfer the acetyl group from AcAMP to the sulfhydryl group of CoA, forming the product AcCoA. The polypeptide is Acetyl-coenzyme A synthetase (Shewanella sp. (strain MR-4)).